The sequence spans 881 residues: Leucine--tRNA ligase (881 aa).

The 'HIGH' region motif lies at 48–58; sequence PYPSGKLHMGH. The short motif at 638-642 is the 'KMSKS' region element; sequence KMSKS. Lysine 641 provides a ligand contact to ATP.

It belongs to the class-I aminoacyl-tRNA synthetase family.

The protein localises to the cytoplasm. It carries out the reaction tRNA(Leu) + L-leucine + ATP = L-leucyl-tRNA(Leu) + AMP + diphosphate. This chain is Leucine--tRNA ligase, found in Herminiimonas arsenicoxydans.